The primary structure comprises 231 residues: Large ribosomal subunit protein uL1 (231 aa).

Belongs to the universal ribosomal protein uL1 family. In terms of assembly, part of the 50S ribosomal subunit.

In terms of biological role, binds directly to 23S rRNA. The L1 stalk is quite mobile in the ribosome, and is involved in E site tRNA release. Its function is as follows. Protein L1 is also a translational repressor protein, it controls the translation of the L11 operon by binding to its mRNA. The chain is Large ribosomal subunit protein uL1 from Thioalkalivibrio sulfidiphilus (strain HL-EbGR7).